Consider the following 37-residue polypeptide: Cytochrome b6-f complex subunit 5 (37 aa).

A helical transmembrane segment spans residues 5 to 25; sequence LLFGIVLGLIPVTLVGLFVAA.

This sequence belongs to the PetG family. As to quaternary structure, the 4 large subunits of the cytochrome b6-f complex are cytochrome b6, subunit IV (17 kDa polypeptide, PetD), cytochrome f and the Rieske protein, while the 4 small subunits are PetG, PetL, PetM and PetN. The complex functions as a dimer.

It localises to the plastid. Its subcellular location is the chloroplast thylakoid membrane. Functionally, component of the cytochrome b6-f complex, which mediates electron transfer between photosystem II (PSII) and photosystem I (PSI), cyclic electron flow around PSI, and state transitions. PetG is required for either the stability or assembly of the cytochrome b6-f complex. The chain is Cytochrome b6-f complex subunit 5 from Rhodomonas salina (Cryptomonas salina).